Reading from the N-terminus, the 105-residue chain is Small ribosomal subunit protein uS17 (105 aa).

This sequence belongs to the universal ribosomal protein uS17 family. Part of the 30S ribosomal subunit.

Its function is as follows. One of the primary rRNA binding proteins, it binds specifically to the 5'-end of 16S ribosomal RNA. The polypeptide is Small ribosomal subunit protein uS17 (Thermus aquaticus).